We begin with the raw amino-acid sequence, 838 residues long: MTDTTLPPDDSLDRIEPVDIQQEMQRSYIDYAMSVIVGRALPEVRDGLKPVHRRVLYAMFDSGFRPDRSHAKSARSVAETMGNYHPHGDASIYDSLVRMAQPWSLRYPLVDGQGNFGSPGNDPPAAMRYTEARLTPLAMEMLREIDEETVDFIPNYDGRVQEPTVLPSRFPNLLANGSGGIAVGMATNIPPHNLRELADAVFWALENHDADEEETLAAVMGRVKGPDFPTAGLIVGSQGTADAYKTGRGSIRMRGVVEVEEDSRGRTSLVITELPYQVNHDNFITSIAEQVRDGKLAGISNIEDQSSDRVGLRIVIEIKRDAVAKVVINNLYKHTQLQTSFGANMLAIVDGVPRTLRLDQLIRYYVDHQLDVIVRRTTYRLRKANERAHILRGLVKALDALDEVIALIRASETVDIARAGLIELLDIDEIQAQAILDMQLRRLAALERQRIIDDLAKIEAEIADLEDILAKPERQRGIVRDELAEIVDRHGDDRRTRIIAADGDVSDEDLIAREDVVVTITETGYAKRTKTDLYRSQKRGGKGVQGAGLKQDDIVAHFFVCSTHDLILFFTTQGRVYRAKAYDLPEASRTARGQHVANLLAFQPEERIAQVIQIRGYTDAPYLVLATRNGLVKKSKLTDFDSNRSGGIVAVNLRDNDELVGAVLCSADDDLLLVSANGQSIRFSATDEALRPMGRATSGVQGMRFNIDDRLLSLNVVREGTYLLVATSGGYAKRTAIEEYPVQGRGGKGVLTVMYDRRRGRLVGALIVDDDSELYAVTSGGGVIRTAARQVRKAGRQTKGVRLMNLGEGDTLLAIARNAEESGDDNAVDANGADQTGN.

The Topo IIA-type catalytic domain maps to 41–510 (LPEVRDGLKP…ADGDVSDEDL (470 aa)). The active-site O-(5'-phospho-DNA)-tyrosine intermediate is the Y129. Residues 537-543 (QKRGGKG) carry the GyrA-box motif.

Belongs to the type II topoisomerase GyrA/ParC subunit family. As to quaternary structure, heterotetramer, composed of two GyrA and two GyrB chains. In the heterotetramer, GyrA contains the active site tyrosine that forms a transient covalent intermediate with DNA, while GyrB binds cofactors and catalyzes ATP hydrolysis.

The protein localises to the cytoplasm. It carries out the reaction ATP-dependent breakage, passage and rejoining of double-stranded DNA.. Its function is as follows. A type II topoisomerase that negatively supercoils closed circular double-stranded (ds) DNA in an ATP-dependent manner to modulate DNA topology and maintain chromosomes in an underwound state. Negative supercoiling favors strand separation, and DNA replication, transcription, recombination and repair, all of which involve strand separation. Also able to catalyze the interconversion of other topological isomers of dsDNA rings, including catenanes and knotted rings. Type II topoisomerases break and join 2 DNA strands simultaneously in an ATP-dependent manner. In Mycobacterium tuberculosis (strain CDC 1551 / Oshkosh), this protein is DNA gyrase subunit A.